Reading from the N-terminus, the 212-residue chain is MKMMSTRALALGAAAVLAFAAATAHAQRCGEQGSNMECPNNLCCSQYGYCGMGGDYCGKGCQNGACYTSKRCGTQAGGKTCPNNHCCSQWGYCGFGAEYCGAGCQGGPCRADIKCGSQAGGKLCPNNLCCSQWGYCGLGSEFCGEGCQGGACSTDKPCGKAAGGKVCTNNYCCSKWGSCGIGPGYCGAGCQSGGCDGVFAEAIAANSTLVAE.

The signal sequence occupies residues 1 to 26 (MKMMSTRALALGAAAVLAFAAATAHA). Gln-27 carries the pyrrolidone carboxylic acid modification. 4 consecutive Chitin-binding type-1 domains span residues 27 to 68 (QRCG…ACYT), 69 to 111 (SKRC…PCRA), 112 to 154 (DIKC…ACST), and 155 to 197 (DKPC…GCDG). 16 cysteine pairs are disulfide-bonded: Cys-29–Cys-44, Cys-38–Cys-50, Cys-43–Cys-57, Cys-61–Cys-66, Cys-72–Cys-87, Cys-81–Cys-93, Cys-86–Cys-100, Cys-104–Cys-109, Cys-115–Cys-130, Cys-124–Cys-136, Cys-129–Cys-143, Cys-147–Cys-152, Cys-158–Cys-173, Cys-167–Cys-179, Cys-172–Cys-186, and Cys-190–Cys-195. Residue 36-38 (MEC) coordinates substrate. Residue 88-99 (SQWGYCGFGAEY) participates in substrate binding. Residue 140–141 (SE) participates in substrate binding. Asn-206 is a glycosylation site (N-linked (GlcNAc...) asparagine).

In terms of tissue distribution, in roots.

Carbohydrate binding. The polypeptide is Root-specific lectin (Hordeum vulgare (Barley)).